The chain runs to 540 residues: 2,3-bisphosphoglycerate-independent phosphoglycerate mutase (540 aa).

Positions 24 and 74 each coordinate Mn(2+). Catalysis depends on serine 74, which acts as the Phosphoserine intermediate. Residues histidine 135, 165–166 (RD), arginine 197, arginine 203, 268–271 (RPDR), and lysine 341 contribute to the substrate site. Positions 408, 412, 449, 450, and 467 each coordinate Mn(2+).

This sequence belongs to the BPG-independent phosphoglycerate mutase family. As to quaternary structure, monomer. Requires Mn(2+) as cofactor.

The enzyme catalyses (2R)-2-phosphoglycerate = (2R)-3-phosphoglycerate. It functions in the pathway carbohydrate degradation; glycolysis; pyruvate from D-glyceraldehyde 3-phosphate: step 3/5. In terms of biological role, catalyzes the interconversion of 2-phosphoglycerate and 3-phosphoglycerate. This is 2,3-bisphosphoglycerate-independent phosphoglycerate mutase from Prochlorococcus marinus (strain MIT 9303).